A 101-amino-acid polypeptide reads, in one-letter code: Large ribosomal subunit protein uL23 (101 aa).

This sequence belongs to the universal ribosomal protein uL23 family. Part of the 50S ribosomal subunit. Contacts protein L29, and trigger factor when it is bound to the ribosome.

In terms of biological role, one of the early assembly proteins it binds 23S rRNA. One of the proteins that surrounds the polypeptide exit tunnel on the outside of the ribosome. Forms the main docking site for trigger factor binding to the ribosome. This Corynebacterium jeikeium (strain K411) protein is Large ribosomal subunit protein uL23.